The following is a 247-amino-acid chain: tRNA (guanine-N(1)-)-methyltransferase (247 aa).

S-adenosyl-L-methionine-binding positions include Gly116 and 135–140; that span reads IGDYVL.

It belongs to the RNA methyltransferase TrmD family. Homodimer.

The protein resides in the cytoplasm. The catalysed reaction is guanosine(37) in tRNA + S-adenosyl-L-methionine = N(1)-methylguanosine(37) in tRNA + S-adenosyl-L-homocysteine + H(+). Functionally, specifically methylates guanosine-37 in various tRNAs. This Symbiobacterium thermophilum (strain DSM 24528 / JCM 14929 / IAM 14863 / T) protein is tRNA (guanine-N(1)-)-methyltransferase.